A 504-amino-acid polypeptide reads, in one-letter code: O-fucosyltransferase 39 (504 aa).

A helical; Signal-anchor for type II membrane protein membrane pass occupies residues 11–27; sequence WILSMFFFVVLFCNNVS. N-linked (GlcNAc...) asparagine glycosylation occurs at Asn115. 288–290 contributes to the substrate binding site; that stretch reads HLR. N-linked (GlcNAc...) asparagine glycosylation is found at Asn359 and Asn460.

It belongs to the glycosyltransferase GT106 family.

The protein resides in the membrane. It participates in glycan metabolism. The chain is O-fucosyltransferase 39 from Arabidopsis thaliana (Mouse-ear cress).